Reading from the N-terminus, the 91-residue chain is Putative 26S proteasome complex subunit sem-1 (91 aa).

The tract at residues methionine 1–aspartate 73 is disordered. Positions asparagine 8–valine 28 are enriched in basic and acidic residues. Acidic residues-rich tracts occupy residues leucine 29–threonine 48 and glutamate 63–aspartate 72.

The protein belongs to the DSS1/SEM1 family. Part of the 26S proteasome.

Functionally, subunit of the 26S proteasome which plays a role in ubiquitin-dependent proteolysis. The chain is Putative 26S proteasome complex subunit sem-1 (sem-1) from Neurospora crassa (strain ATCC 24698 / 74-OR23-1A / CBS 708.71 / DSM 1257 / FGSC 987).